We begin with the raw amino-acid sequence, 183 residues long: DELTA-miturgitoxin-Cp1c (183 aa).

The signal sequence occupies residues 1 to 20 (MKFSLFFSVFFLAVLHACLS). A propeptide spanning residues 21-47 (ESEIDLEDEEHFMSSDSFLSEIQDESR) is cleaved from the precursor. The short motif at 44 to 47 (DESR) is the Processing quadruplet motif element. Intrachain disulfides connect cysteine 51–cysteine 66, cysteine 58–cysteine 75, cysteine 65–cysteine 88, cysteine 77–cysteine 86, cysteine 115–cysteine 130, cysteine 122–cysteine 139, cysteine 129–cysteine 157, and cysteine 141–cysteine 155. Residues 164–177 (QAIEGALRIAKKLI) form a predicted alpha-helix region. The residue at position 181 (tryptophan 181) is a Tryptophan amide.

Belongs to the neurotoxin 19 (CSTX) family. Double-CSTX subfamily. Post-translationally, cleavage of the propeptide depends on the processing quadruplet motif (XXXR, with at least one of X being E). Expressed by the venom gland.

The protein localises to the secreted. It is found in the target cell membrane. Its function is as follows. Spider venom toxin that exhibits cytolytic activity by forming an alpha-helix across the membrane. Lethal to insect larvae. Causes instant paralysis and death in the larvae of the flesh fly (S.carnaria) at doses of 20 ug/g, at doses of less than 10 ug/g causes reversible paralysis. Has cytolytic activity against insect Sf9 cells. Causes stable and irreversible depolarization of fly muscle fibers, leading to contracture at higher toxin concentrations. Destabilizes membranes. The chain is DELTA-miturgitoxin-Cp1c from Cheiracanthium punctorium (Yellow sac spider).